Here is a 672-residue protein sequence, read N- to C-terminus: Protein seu-1 (672 aa).

Disordered stretches follow at residues 1–463 (MSSI…AGTE) and 576–672 (LAPP…LKHL). Basic and acidic residues predominate over residues 8 to 20 (NDNRRPTFRDHRT). The span at 25 to 34 (GRGGSGGGGR) shows a compositional bias: gly residues. A compositionally biased stretch (basic and acidic residues) spans 62–85 (RSQDHRQRSPEVRRHRSPEKESKD). The segment covering 87–105 (VVTSTGSSRGATSASVTSS) has biased composition (low complexity). 4 stretches are compositionally biased toward basic and acidic residues: residues 107 to 138 (RRHESGERHRETHRREDKEKKPEKSTDRDADR), 189 to 226 (VSRHSENRRKSSSDVSRRHGDKEKRDRKREDVKKKSNG), 234 to 268 (RRREEDHKRKSESSRKEKKDEDVKEKVVDENKVED), and 289 to 306 (EQAKEHGSDEPERPESHQ). Low complexity predominate over residues 307-317 (SAHSAAVSNAS). Residues 322–343 (SEEELDYEEDDIDVDLDGDIDV) show a composition bias toward acidic residues. 6 stretches are compositionally biased toward basic and acidic residues: residues 366-375 (NDVKDETMEE), 382-396 (PEKKKPRTSENDDKD), 410-424 (RREDDKDRRQSSDHH), 436-447 (RATDHKESRRSE), 607-626 (SFGDRGNRSDEHHGGSRHMD), and 636-659 (DHRVRDDGRRVSSFEDRKRPERGF).

In terms of tissue distribution, highly expressed in intestinal cells, lateral hypodermal (seam) cells, Pn.p ventral hypodermal cells, and spermatheca. Expressed at low levels in the ventral nerve cord.

It localises to the nucleus. In terms of biological role, together with unc-5, involved in touch neuron axon guidance. During gonad morphogenesis, plays a role in the unc-5-/unc-6-mediated migration of distal tip cells along the body. The chain is Protein seu-1 from Caenorhabditis elegans.